Consider the following 97-residue polypeptide: Small ribosomal subunit protein uS19 (97 aa).

The tract at residues 74–97 (FSPTRRFGGHPDKKAVKGKIEKQG) is disordered. The segment covering 82-97 (GHPDKKAVKGKIEKQG) has biased composition (basic and acidic residues).

The protein belongs to the universal ribosomal protein uS19 family.

Protein S19 forms a complex with S13 that binds strongly to the 16S ribosomal RNA. The polypeptide is Small ribosomal subunit protein uS19 (Petrotoga mobilis (strain DSM 10674 / SJ95)).